Consider the following 227-residue polypeptide: ATP synthase F(0) complex subunit a (227 aa).

6 helical membrane-spanning segments follow: residues 9 to 29 (FASP…LPWV), 69 to 89 (WALL…LGLL), 98 to 118 (QLSL…IIGM), 132 to 152 (EGTP…SLFI), 165 to 185 (LTAG…LMPM), and 190 to 210 (AILT…VAMI).

It belongs to the ATPase A chain family. As to quaternary structure, component of the ATP synthase complex composed at least of ATP5F1A/subunit alpha, ATP5F1B/subunit beta, ATP5MC1/subunit c (homooctomer), MT-ATP6/subunit a, MT-ATP8/subunit 8, ATP5ME/subunit e, ATP5MF/subunit f, ATP5MG/subunit g, ATP5MK/subunit k, ATP5MJ/subunit j, ATP5F1C/subunit gamma, ATP5F1D/subunit delta, ATP5F1E/subunit epsilon, ATP5PF/subunit F6, ATP5PB/subunit b, ATP5PD/subunit d, ATP5PO/subunit OSCP. ATP synthase complex consists of a soluble F(1) head domain (subunits alpha(3) and beta(3)) - the catalytic core - and a membrane F(0) domain - the membrane proton channel (subunits c, a, 8, e, f, g, k and j). These two domains are linked by a central stalk (subunits gamma, delta, and epsilon) rotating inside the F1 region and a stationary peripheral stalk (subunits F6, b, d, and OSCP). Interacts with DNAJC30; interaction is direct.

Its subcellular location is the mitochondrion inner membrane. The catalysed reaction is H(+)(in) = H(+)(out). Subunit a, of the mitochondrial membrane ATP synthase complex (F(1)F(0) ATP synthase or Complex V) that produces ATP from ADP in the presence of a proton gradient across the membrane which is generated by electron transport complexes of the respiratory chain. ATP synthase complex consist of a soluble F(1) head domain - the catalytic core - and a membrane F(1) domain - the membrane proton channel. These two domains are linked by a central stalk rotating inside the F(1) region and a stationary peripheral stalk. During catalysis, ATP synthesis in the catalytic domain of F(1) is coupled via a rotary mechanism of the central stalk subunits to proton translocation. With the subunit c (ATP5MC1), forms the proton-conducting channel in the F(0) domain, that contains two crucial half-channels (inlet and outlet) that facilitate proton movement from the mitochondrial intermembrane space (IMS) into the matrix. Protons are taken up via the inlet half-channel and released through the outlet half-channel, following a Grotthuss mechanism. This Carassius auratus (Goldfish) protein is ATP synthase F(0) complex subunit a.